The chain runs to 146 residues: Hemoglobin subunit beta (146 aa).

The 145-residue stretch at 2–146 (HWTADEKQLI…VAHALALGYH (145 aa)) folds into the Globin domain. Positions 63 and 92 each coordinate heme b.

The protein belongs to the globin family. In terms of assembly, heterotetramer of two alpha chains and two beta chains. As to expression, red blood cells.

In terms of biological role, involved in oxygen transport from the lung to the various peripheral tissues. This chain is Hemoglobin subunit beta (HBB), found in Chrysemys picta bellii (Western painted turtle).